The following is a 244-amino-acid chain: MICTLLRAVRCTERLHGCPGKPWFLPHSVPHRACSQTEPRWRWGLQEQNTTARPRCIWGVTQRSIWTQVRSPQSAKEDGSKQVSVHRSQGGETVLSTSQKVKEAGRDFTYLIVVLIGISITGGLFYTIFRELFSSSSPNKIYGKALEKCRSHPEVISVFGEPVKGYGEVTRRGRRQLVSFIEYKKDGLKHMRVKFYIQGSEPGKQGTVHLEVKENPESGEYEFRYIFVELEPYSRTIVVEDNRS.

A mitochondrion-targeting transit peptide spans 1–18 (MICTLLRAVRCTERLHGC). The tract at residues 69-89 (VRSPQSAKEDGSKQVSVHRSQ) is disordered. The helical transmembrane segment at 108–128 (FTYLIVVLIGISITGGLFYTI) threads the bilayer.

It belongs to the TIM21 family. Component of the TIM23 complex. Component of the MITRAC (mitochondrial translation regulation assembly intermediate of cytochrome c oxidase complex) complex, the core components of this complex being COA3/MITRAC12 and COX14. Interacts with COA3 and MT-CO1/COX1.

The protein localises to the mitochondrion membrane. Participates in the translocation of transit peptide-containing proteins across the mitochondrial inner membrane. Also required for assembly of mitochondrial respiratory chain complex I and complex IV as component of the MITRAC (mitochondrial translation regulation assembly intermediate of cytochrome c oxidase complex) complex. Probably shuttles between the presequence translocase and respiratory-chain assembly intermediates in a process that promotes incorporation of early nuclear-encoded subunits into these complexes. This is Mitochondrial import inner membrane translocase subunit Tim21 (TIMM21) from Bos taurus (Bovine).